We begin with the raw amino-acid sequence, 1275 residues long: Transient receptor potential protein (1275 aa).

The Cytoplasmic portion of the chain corresponds to 1 to 366 (MGSNTESDAE…SEGAKFMRKP (366 aa)). 2 ANK repeats span residues 69–98 (MNRSALISAIENENFDLMVILLEHNIEVGD) and 143–172 (VDITPLILAAHRNNYEILKILLDRGATLPM). Residues 367 to 387 (FVKFITHSCSYMFFLMLLGAA) traverse the membrane as a helical segment. Residues 388 to 418 (SLRVVQITFELLAFPWMLTMLEDWRKHERGS) are Extracellular-facing. Residues 419–439 (LPGPIELAIITYIMALIFEEL) traverse the membrane as a helical segment. The Cytoplasmic segment spans residues 440–450 (KSLYSDGLFEY). The chain crosses the membrane as a helical span at residues 451–471 (IMDLWNIVDYISNMFYVTWIL). Residues 472-541 (CRATAWVIVH…LGPLQVSLGR (70 aa)) lie on the Extracellular side of the membrane. The chain crosses the membrane as a helical span at residues 542 to 562 (MIIDIIKFFFIYTLVLFAFGC). Over 563–609 (GLNQLLWYYAELEKNKCYHLHPDVADFDDQEKACTIWRRFSNLFETS) the chain is Cytoplasmic. Residues 610–630 (QSLFWASFGLVDLVSFDLAGI) form a helical membrane-spanning segment. The Extracellular portion of the chain corresponds to 631–637 (KSFTRFW). The chain crosses the membrane as a helical span at residues 638–658 (ALLMFGSYSVINIIVLLNMLI). The Cytoplasmic segment spans residues 659 to 1275 (AMMSNSYQII…VTGRMISGWL (617 aa)). Residues 933 to 1275 (DEVSLADDEG…VTGRMISGWL (343 aa)) form a disordered region. Low complexity-rich tracts occupy residues 955–964 (ASGSKKSITS) and 972–982 (SMLAAAALRAS). Over residues 1002–1022 (PTDDKKAGDDKDKQQPPKDSK) the composition is skewed to basic and acidic residues. A compositionally biased stretch (low complexity) spans 1033-1049 (QKPTPGAGAPKPQAAGT). Residues 1080 to 1098 (ESAKPEAAAKKEESSKTEA) show a composition bias toward basic and acidic residues. Over residues 1099–1118 (SKPAATNGAAKSAAPSAPSD) the composition is skewed to low complexity. The segment covering 1144–1239 (KPDEKKSGPE…KPADDKDKKP (96 aa)) has biased composition (basic and acidic residues).

The protein belongs to the transient receptor (TC 1.A.4) family. STrpC subfamily. In terms of assembly, the C-terminus interacts with a PDZ domain of inaD to form the core of the inaD signaling complex. Other members of the complex include norpA (PLC), inaC (PKC), and possibly trpl, ninaC, Fkbp59, calmodulin and rhodopsin. Forms homomultimers and heteromultimers with trpl. Interaction with trpl is mediated in part by the N-terminal region and the transmembrane domains. Also interacts, though to a lower extent, with Trpgamma. Phosphorylated by inaC. In terms of tissue distribution, expressed predominantly in the rhabdomeres of photoreceptor cells. Expressed in the third antennal segment and in the olfactory segment at approximately 70 hours after puparium formation during antennal development.

The protein resides in the cell membrane. The protein localises to the cell projection. It is found in the rhabdomere membrane. Functionally, a light-sensitive calcium channel that is required for inositide-mediated Ca(2+) entry in the retina during phospholipase C (PLC)-mediated phototransduction. Ca(2+) influx may then feed back and inhibit PLC, thereby facilitating phosphatidylinositol 4,5 bisphosphate (PIP2) recycling. Trp and trpl act together in the light response, though it is unclear whether as heteromultimers or as distinct units, and are activated by fatty acids and metabolic stress. Also required for olfactory adaptation and may be involved in olfactory system development. This Drosophila melanogaster (Fruit fly) protein is Transient receptor potential protein (trp).